Consider the following 544-residue polypeptide: MAKSILFSEDARKKMQEGVDKLANTVKVTLGPKGRNVVLDKKFGSPLITNDGVTIAKEIELEEPYENMGAQLVKEVATKTNDVAGDGTTTATLLAQAIIREGLKNVTAGANPMLIRQGIKIAVDKAVEEIKKVSRTVNGKEDIARIAAISASDEEIGKLIADAMEKVGNEGVITVEESKTMGTELDVVEGMEFDRGYLSAYMVTDTEKMEAVLDDPYILITDKKISTIQDILPLLEKMVQQGKKLLIIAEDVEGEALTTLVVNKLRGTFTCVAVKAPGFGDRRKEMLQDIAILTDGKVISEELGRDLKEVSLEDLGRAESVKIDKENTTIVNGRGDKKSIQDRVSQIKAQIEETTSEFDKEKLQERLAKLSGGVAVIKVGAATETELKEKKMRIEDALAATKAGVEEGMGPGGGTAYVNAIPEVSKLTSDVADVKVGIDIITKALEEPVRQIAANAGVEGSVIIEKVKNSEPGVGYDVLTDKYVNMIDNGIVDPTKVTRSALQNAASVAATFLTTEAAVVDIPDKNNAAGLPGAPGMGGMDGMY.

Residues 29 to 32 (TLGP), 86 to 90 (DGTTT), glycine 413, 477 to 479 (DVL), and aspartate 493 each bind ATP.

It belongs to the chaperonin (HSP60) family. As to quaternary structure, forms a cylinder of 14 subunits composed of two heptameric rings stacked back-to-back. Interacts with the co-chaperonin GroES.

It localises to the cytoplasm. It catalyses the reaction ATP + H2O + a folded polypeptide = ADP + phosphate + an unfolded polypeptide.. In terms of biological role, together with its co-chaperonin GroES, plays an essential role in assisting protein folding. The GroEL-GroES system forms a nano-cage that allows encapsulation of the non-native substrate proteins and provides a physical environment optimized to promote and accelerate protein folding. The sequence is that of Chaperonin GroEL from Clostridium kluyveri (strain NBRC 12016).